A 582-amino-acid chain; its full sequence is MNYAVLPPELNSLRMFTGAGSAPMLAAAVAWDGLAAELGSAASSFGSVTSDLASQAWQGPAAAAMAAAAAPYAGWLSAAAARAAGAAAQAKAVASAFEAARAATVHPLLVAANRNAFAQLVMSNWFGLNAPLIAAVEGAYEQMWAADVAAMVGYHSGASAAAEQLVPFQQALQQLPNLGIGNIGNANLGGGNTGDLNTGNGNIGNTNLGSGNRGDANLGSGNIGNSNVGGGNVGNGNFGSGNGRAGLPGSGNVGNGNLGNSNLGSGNTGNSNVGFGNTGNNNVGTGNAGSGNIGAGNTGSSNWGFGNNGIGNIGFGNTGNGNIGFGLTGNNQVGIGGLNSGSGNIGLFNSGTNNVGFFNSGNGNLGIGNSSDANVGIGNSGATVGPFVAGHNTGFGNSGSLNTGMGNAGGVNTGFGNGGAINLGFGNSGQLNAGSFNAGSINTGNFNSGQGNTGDFNAGVRNTGWSNSGLTNTGAFNAGSLNTGFGAVGTGSGPNSGFGNAGTNNSGFFNTGVGSSGFQNGGSNNSGLQNAVGTVIAAGFGNTGAQTVGIANSGVLNSGFFNSGVHNSGGFNSENQRSGFGN.

Positions 1 to 27 are cleaved as a signal peptide; the sequence is MNYAVLPPELNSLRMFTGAGSAPMLAA. Gly residues predominate over residues 241–257; sequence GNGRAGLPGSGNVGNGN. A disordered region spans residues 241–278; that stretch reads GNGRAGLPGSGNVGNGNLGNSNLGSGNTGNSNVGFGNT. Over residues 258 to 278 the composition is skewed to low complexity; the sequence is LGNSNLGSGNTGNSNVGFGNT.

Belongs to the mycobacterial PPE family.

This is an uncharacterized protein from Mycobacterium tuberculosis (strain ATCC 25618 / H37Rv).